Reading from the N-terminus, the 342-residue chain is Phosphoribosylformylglycinamidine cyclo-ligase (342 aa).

It belongs to the AIR synthase family.

The protein localises to the cytoplasm. The catalysed reaction is 2-formamido-N(1)-(5-O-phospho-beta-D-ribosyl)acetamidine + ATP = 5-amino-1-(5-phospho-beta-D-ribosyl)imidazole + ADP + phosphate + H(+). It participates in purine metabolism; IMP biosynthesis via de novo pathway; 5-amino-1-(5-phospho-D-ribosyl)imidazole from N(2)-formyl-N(1)-(5-phospho-D-ribosyl)glycinamide: step 2/2. This Staphylococcus aureus (strain Mu3 / ATCC 700698) protein is Phosphoribosylformylglycinamidine cyclo-ligase.